The primary structure comprises 105 residues: Small ribosomal subunit protein eS24 (105 aa).

The interval 86–105 (LERNKIEADEEADEEAAEEA) is disordered. The span at 93–105 (ADEEADEEAAEEA) shows a compositional bias: acidic residues.

Belongs to the eukaryotic ribosomal protein eS24 family.

In Natronomonas pharaonis (strain ATCC 35678 / DSM 2160 / CIP 103997 / JCM 8858 / NBRC 14720 / NCIMB 2260 / Gabara) (Halobacterium pharaonis), this protein is Small ribosomal subunit protein eS24.